We begin with the raw amino-acid sequence, 368 residues long: Phosphate acyltransferase (368 aa).

The protein belongs to the PlsX family. As to quaternary structure, homodimer. Probably interacts with PlsY.

It is found in the cytoplasm. The catalysed reaction is a fatty acyl-[ACP] + phosphate = an acyl phosphate + holo-[ACP]. It participates in lipid metabolism; phospholipid metabolism. Functionally, catalyzes the reversible formation of acyl-phosphate (acyl-PO(4)) from acyl-[acyl-carrier-protein] (acyl-ACP). This enzyme utilizes acyl-ACP as fatty acyl donor, but not acyl-CoA. This is Phosphate acyltransferase from Methylibium petroleiphilum (strain ATCC BAA-1232 / LMG 22953 / PM1).